A 2136-amino-acid polypeptide reads, in one-letter code: Protein CELLULOSE SYNTHASE INTERACTIVE 3 (2136 aa).

42 ARM repeats span residues 27–66, 71–111, 113–152, 159–201, 204–243, 246–286, 289–337, 376–417, 419–458, 461–500, 503–542, 545–584, 586–618, 619–663, 666–705, 711–750, 752–791, 811–848, 849–887, 936–980, 1013–1041, 1042–1083, 1109–1149, 1163–1204, 1207–1247, 1249–1288, 1290–1329, 1333–1375, 1377–1416, 1418–1457, 1460–1499, 1518–1546, 1547–1585, 1587–1626, 1628–1669, 1670–1704, 1710–1750, 1790–1833, 1836–1875, 1921–1960, 1969–2008, and 2010–2035; these read MEMD…LLGI, REAR…VLCK, KDLR…EVSS, HIGM…NLCG, DGYW…RLVL, CDSI…ALSA, DEAK…NVFG, PESS…SLYG, SSLS…GLCH, VGIW…ILTA, DDSK…NLCC, EEIR…KLVH, ADPA…HVLS, KASQ…DLFS, QDIC…ALSR, NNKK…NLLS, PDIA…QLLK, SLVD…FSYP, PWIA…RLCS, QLIT…GFLE, SVDA…YTSS, AQAE…TLAV, RGIN…SLVK, EDVR…RIAD, DTNK…VLFS, HELR…ELFD, ENIR…KLSS, SNTA…VVFS, KNIR…ILLD, EQHL…KLGK, VPRK…ILTN, AVLL…KQQT, LEAF…HFLT, EDFQ…KISA, WPKA…NILQ, YDAE…ALML, ASST…NNPR, SQHE…NFVM, RTNR…FLFS, PKLR…LLRH, VAKS…CLPG, and LTVN…QLTI. The C2 domain occupies 1989–2106; that stretch reads KTCPPRFHDK…VTEGEYSGSL (118 aa).

As to quaternary structure, associates with cellulase synthase (CESA) complexes. Binds to cortical microtubules. Interacts with CESA3 and CESA6. Expressed in dark-grown hypocotyls, leaves (confined to vasculature and trichomes), stamen, pollen, developing siliques, and roots. Restricted in meristematic tissue of the shoot and root. Present in distinct punctae at the cell cortex, called microtubule-associated cellulose synthase compartments, that move with constant velocities of 10 to 3000 nm/min.

It localises to the cell membrane. It is found in the cytoplasm. The protein resides in the cytoskeleton. Its subcellular location is the endomembrane system. Regulator of the microtubular cytoskeleton. Microtubule-associated protein involved in the association of cellulase synthase (CESA) complexes (CSCs) and cortical microtubules. Promotes dynamics of CSCs in the plasma membrane in both microtubules-dependent and microtubules-independent manners. Regulates primary cell wall biosynthesis and cellulose microfibrils organization. This chain is Protein CELLULOSE SYNTHASE INTERACTIVE 3, found in Arabidopsis thaliana (Mouse-ear cress).